The chain runs to 1015 residues: Frequency clock protein (1015 aa).

8 disordered regions span residues 1–138 (MQPT…SADD), 183–285 (KRKK…QKVD), 352–383 (DFSPQQQQQQQQQQQQQPKSNFITNPGATFSS), 402–465 (HVAG…DPDR), 544–614 (GRKI…VSAS), 629–668 (SPNEQSSMEDGTLSSFGPIEESNADSRWGQSGSGASNRRK), 706–728 (ERPDAQGQFARPLPFRSGSGSSI), and 895–1015 (SEDD…SSQG). Low complexity predominate over residues 49–68 (SAPPNDSNENSSSPRRASSG). The span at 69-80 (ESHETGQSDAKK) shows a compositional bias: basic and acidic residues. Positions 82–95 (FNQSNQNPTATFDS) are enriched in polar residues. Residues 107-117 (KESDSSNEDKP) are compositionally biased toward basic and acidic residues. Low complexity-rich tracts occupy residues 203–216 (SPNTSSSKRNSTTK), 228–267 (SGSGSKSQSKHASSSSGSHTRPVDSAYASMSTGAGSSGTS), and 356–368 (QQQQQQQQQQQQQ). Residues 369–383 (PKSNFITNPGATFSS) show a composition bias toward polar residues. A compositionally biased stretch (low complexity) spans 431-442 (NSSSNGNDSGTN). Pro residues predominate over residues 443-453 (PSPPMPPPPEQ). Residues 454-465 (RPTRPRDLDPDR) are compositionally biased toward basic and acidic residues. The span at 556–570 (TKFSSESSGDLSQRS) shows a compositional bias: polar residues. Positions 584-588 (HKRQK) match the Nuclear localization signal motif. Residues 590–600 (GHSTGDSGSSG) are compositionally biased toward low complexity. Positions 629 to 643 (SPNEQSSMEDGTLSS) are enriched in polar residues. Acidic residues-rich tracts occupy residues 895–909 (SEDDFGSDGDDEFNS) and 934–946 (SGDEDGEEPEDDI). The span at 976 to 1003 (GSSRGRSNSASAEAVLRAGGSSAATAGG) shows a compositional bias: low complexity.

Belongs to the FRQ family.

The protein localises to the nucleus. Functionally, circadian clock component involved in the generation of biological rhythms, in particular in rhythm stability, period length, and temperature compensation. Behaves as a negative element in circadian transcriptional loop. The chain is Frequency clock protein (FRQ) from Trichoderma spinulosum (Hypocrea spinulosa).